We begin with the raw amino-acid sequence, 295 residues long: MPGSTRKLPVWLPILVLLIAMSSIQSGASLAKSLFPLVGAPGVTALRLALGTLILIAFFKPWRLRFAKEQRLPLLFYGLSLGGMNYLFYLSIQTVPLGIAVALEFTGPLAVALFSSRRPVDFIWVVLAVLGLWFLLPLGQDMSHVDLTGAALALGAGACWAVYILTGQRAGAEHGPATVAVGSLIAAIIFVPIGAVQAGDALWHWSILPLGLAVAVLSTALPYSLEMIALTRLPTRTFGTLMSMEPALAAVSGMIFLGETLTGIQILALCAIIAASMGSTLTIRREPQIKQVDVK.

The Cytoplasmic portion of the chain corresponds to 1–7 (MPGSTRK). A helical transmembrane segment spans residues 8–28 (LPVWLPILVLLIAMSSIQSGA). Residues 29-38 (SLAKSLFPLV) lie on the Periplasmic side of the membrane. The 106-residue stretch at 30–135 (LAKSLFPLVG…VLAVLGLWFL (106 aa)) folds into the EamA 1 domain. A helical membrane pass occupies residues 39–59 (GAPGVTALRLALGTLILIAFF). Over 60-71 (KPWRLRFAKEQR) the chain is Cytoplasmic. Residues 72 to 92 (LPLLFYGLSLGGMNYLFYLSI) traverse the membrane as a helical segment. Position 93 (Gln-93) is a topological domain, periplasmic. A helical membrane pass occupies residues 94-114 (TVPLGIAVALEFTGPLAVALF). The Cytoplasmic portion of the chain corresponds to 115–118 (SSRR). The chain crosses the membrane as a helical span at residues 119–139 (PVDFIWVVLAVLGLWFLLPLG). The Periplasmic portion of the chain corresponds to 140–146 (QDMSHVD). Residues 147–167 (LTGAALALGAGACWAVYILTG) form a helical membrane-spanning segment. Residues 159 to 278 (CWAVYILTGQ…LCAIIAASMG (120 aa)) form the EamA 2 domain. The Cytoplasmic portion of the chain corresponds to 168-175 (QRAGAEHG). A helical membrane pass occupies residues 176–196 (PATVAVGSLIAAIIFVPIGAV). The Periplasmic portion of the chain corresponds to 197 to 200 (QAGD). A helical membrane pass occupies residues 201–221 (ALWHWSILPLGLAVAVLSTAL). The Cytoplasmic segment spans residues 222-237 (PYSLEMIALTRLPTRT). Residues 238 to 258 (FGTLMSMEPALAAVSGMIFLG) traverse the membrane as a helical segment. The Periplasmic portion of the chain corresponds to 259 to 262 (ETLT). Residues 263–283 (GIQILALCAIIAASMGSTLTI) form a helical membrane-spanning segment. Residues 284–295 (RREPQIKQVDVK) are Cytoplasmic-facing.

This sequence belongs to the drug/metabolite transporter (DMT) superfamily. 10 TMS drug/metabolite exporter (DME) (TC 2.A.7.3) family.

It is found in the cell inner membrane. Its function is as follows. Involved in the efflux of threonine and homoserine. The sequence is that of Threonine/homoserine exporter RhtA (rhtA) from Salmonella typhimurium (strain SL1344).